Consider the following 714-residue polypeptide: MMQESATETISNSSMNQNGMSTLSSQLDAGSRDGRSSGDTSSEVSTVELLHLQQQQALQAARQLLLQQQTSGLKSPKSSEKQRPLQVPVSVAMMTPQVITPQQMQQILQQQVLSPQQLQALLQQQQAVMLQQQQLQEFYKKQQEQLHLQLLQQQQQQQQQQQQQQQQQQQQQQQQQQQQQQQQQQQQQQQQHPGKQAKEQQQQQQQQQLAAQQLVFQQQLLQMQQLQQQQHLLSLQRQGLISIPPGQAALPVQSLPQAGLSPAEIQQLWKEVTGVHSMEDNGIKHGGLDLTTNNSSSTTSSTTSKASPPITHHSIVNGQSSVLNARRDSSSHEETGASHTLYGHGVCKWPGCESICEDFGQFLKHLNNEHALDDRSTAQCRVQMQVVQQLEIQLSKERERLQAMMTHLHMRPSEPKPSPKPLNLVSSVTMSKNMLETSPQSLPQTPTTPTAPVTPITQGPSVITPASVPNVGAIRRRHSDKYNIPMSSEIAPNYEFYKNADVRPPFTYATLIRQAIMESSDRQLTLNEIYSWFTRTFAYFRRNAATWKNAVRHNLSLHKCFVRVENVKGAVWTVDEVEYQKRRSQKITGSPTLVKNIPTSLGYGAALNASLQAALAESSLPLLSNPGLINNASSGLLQAVHEDLNGSLDHIDSNGNSSPGCSPQPHIHSIHVKEEPVIAEDEDCPMSLVTTANHSPELEDDREIEEEPLSEDLE.

Polar residues predominate over residues 1-28; that stretch reads MMQESATETISNSSMNQNGMSTLSSQLD. Disordered regions lie at residues 1–45 and 280–338; these read MMQE…SEVS and DNGI…TGAS. Over residues 291–304 the composition is skewed to low complexity; the sequence is TTNNSSSTTSSTTS. The segment covering 314–323 has biased composition (polar residues); sequence SIVNGQSSVL. A compositionally biased stretch (basic and acidic residues) spans 325–336; sequence ARRDSSSHEETG. The C2H2-type zinc-finger motif lies at 345–370; sequence GVCKWPGCESICEDFGQFLKHLNNEH. A leucine-zipper region spans residues 387–408; it reads VQQLEIQLSKERERLQAMMTHL. Residues 421–425 are CTBP1-binding; sequence PLNLV. The segment covering 437-458 has biased composition (low complexity); that stretch reads TSPQSLPQTPTTPTAPVTPITQ. Residues 437-464 form a disordered region; the sequence is TSPQSLPQTPTTPTAPVTPITQGPSVIT. Positions 503-593 form a DNA-binding region, fork-head; the sequence is RPPFTYATLI…SQKITGSPTL (91 aa). Disordered stretches follow at residues 648-667 and 677-714; these read LDHI…QPHI and VIAE…EDLE. Residues 698-714 show a composition bias toward acidic residues; sequence LEDDREIEEEPLSEDLE.

In terms of assembly, forms homodimers and heterodimers with FOXP1 and FOXP4. Dimerization is required for DNA-binding. Interacts with CTBP1. Interacts with FOXP1. Interacts with TBR1. Interacts with ZMYM2. In terms of tissue distribution, highest expression in lung. Lower expression in spleen, skeletal muscle, brain, kidney and small intestine.

The protein resides in the nucleus. Transcriptional repressor that may play a role in the specification and differentiation of lung epithelium. May also play a role in developing neural, gastrointestinal and cardiovascular tissues. Can act with CTBP1 to synergistically repress transcription but CTPBP1 is not essential. Plays a role in synapse formation by regulating SRPX2 levels. The polypeptide is Forkhead box protein P2 (Foxp2) (Mus musculus (Mouse)).